We begin with the raw amino-acid sequence, 712 residues long: MWVCLQLPVFLASVTLFEVAASDTIAQAASTTTISDAVSKVKIQVNKAFLDSRTRLKTTLSSEAPTTQQLSEYFKHAKGRTRTAIRNGQVWEESLKRLRRDTTLTNVTDPSLDLTALSWEVGCGAPVPLVKCDENSPYRTITGDCNNRRSPALGAANRALARWLPAEYEDGLALPFGWTQRKTRNGFRVPLAREVSNKIVGYLDEEGVLDQNRSLLFMQWGQIVDHDLDFAPETELGSNEHSKTQCEEYCIQGDNCFPIMFPKNDPKLKTQGKCMPFFRAGFVCPTPPYQSLAREQINAVTSFLDASLVYGSEPSLASRLRNLSSPLGLMAVNQEAWDHGLAYLPFNNKKPSPCEFINTTARVPCFLAGDFRASEQILLATAHTLLLREHNRLARELKKLNPHWNGEKLYQEARKILGAFIQIITFRDYLPIVLGSEMQKWIPPYQGYNNSVDPRISNVFTFAFRFGHMEVPSTVSRLDENYQPWGPEAELPLHTLFFNTWRIIKDGGIDPLVRGLLAKKSKLMNQDKMVTSELRNKLFQPTHKIHGFDLAAINLQRCRDHGMPGYNSWRGFCGLSQPKTLKGLQTVLKNKILAKKLMDLYKTPDNIDIWIGGNAEPMVERGRVGPLLACLLGRQFQQIRDGDRFWWENPGVFTEKQRDSLQKVSFSRLICDNTHITKVPLHAFQANNYPHDFVDCSTVDKLDLSPWASREN.

An N-terminal signal peptide occupies residues 1-22 (MWVCLQLPVFLASVTLFEVAAS). A propeptide spanning residues 23–100 (DTIAQAASTT…WEESLKRLRR (78 aa)) is cleaved from the precursor. Residue Asn106 is glycosylated (N-linked (GlcNAc...) asparagine). 4 disulfide bridges follow: Cys123/Cys284, Cys132/Cys145, Cys246/Cys256, and Cys250/Cys274. N-linked (GlcNAc...) asparagine glycosylation is present at Asn212. Asp225 lines the heme b pocket. His226 (proton acceptor) is an active-site residue. Asp227 contributes to the Ca(2+) binding site. 4 residues coordinate Ca(2+): Thr301, Phe303, Asp305, and Ser307. Position 315 is a phosphoserine (Ser315). Residues Asn322 and Asn358 are each glycosylated (N-linked (GlcNAc...) asparagine). The cysteines at positions 354 and 365 are disulfide-linked. Residue Glu375 coordinates heme b. N-linked (GlcNAc...) asparagine glycosylation is present at Asn449. Residue His468 coordinates heme b. Tyr482 is subject to 3'-nitrotyrosine. Intrachain disulfides connect Cys573/Cys630 and Cys671/Cys696.

This sequence belongs to the peroxidase family. XPO subfamily. Ca(2+) is required as a cofactor. Requires heme b as cofactor. As to expression, mammary gland; milk.

It localises to the secreted. The protein resides in the cytoplasm. It catalyses the reaction 2 a phenolic donor + H2O2 = 2 a phenolic radical donor + 2 H2O. The enzyme catalyses thiocyanate + H2O2 + H(+) = hypothiocyanous acid + H2O. The catalysed reaction is iodide + H2O2 = hypoiodite + H2O. Heme-containing oxidoreductase which catalyzes the conversion of thiocyanate (SCN(-)) into antimicrobial agent hypothiocyanous acid (OSCN(-)) in the presence of hydrogen peroxide (H2O2). Also involved in the conversion of iodide (I(-)) into hypoiodite (IO(-)) in the presence of H2O2. Responsible for the inactivation of a wide range of micro-organisms and hence, important component of defense mechanism. The lactoperoxidase-SCN(-)-H2O2 system shows antibacterial properties against some streptococci strains. The lactoperoxidase-I(-)-H2O2 system shows antibacterial properties against E.coli. May protect the udder from infection and may promote growth in newborns. May be implicated in airway host defense against infection. May contribute to maintaining an appropriate H2O2 cellular level, therefore protecting cells from H2O2-caused injuries and inflammation. In Bos taurus (Bovine), this protein is Lactoperoxidase (LPO).